The chain runs to 339 residues: Oncoprotein MEQ (339 aa).

Residues 1–80 form a disordered region; that stretch reads MSQEPEPGAM…ARRRRRKQTD (80 aa). Serine 42 is subject to Phosphoserine; by host CDK2. The segment at 57–84 is basic motif; the sequence is KQKLERRRKRNRDAARRRRRKQTDYVDK. Positions 57 to 120 constitute a bZIP domain; the sequence is KQKLERRRKR…TSLRVQLACH (64 aa). Basic residues predominate over residues 60 to 77; that stretch reads LERRRKRNRDAARRRRRK. The Nuclear localization signal motif lies at 62–78; sequence RRRKRNRDAARRRRRKQ. The interval 85–113 is leucine-zipper; that stretch reads LHEACEELQRANEHLRKEIRDLRTECTSL. Residues 120 to 339 are transactivation domain; it reads HEPVCPMAVP…VWWFPGDGRP (220 aa). A compositionally biased stretch (pro residues) spans 145-160; the sequence is PEPPICTPPPPSPDEP. Residues 145–172 form a disordered region; that stretch reads PEPPICTPPPPSPDEPNAPHCSGSQPPI.

The protein belongs to the bZIP family. Jun subfamily. As to quaternary structure, homodimer. Interacts with host JUN; this interaction allows MEQ to engage in host cell processes by disguising itself as a cellular JUN. Post-translationally, phosphorylated by host CDK2; this phosphorylation greatly reduces the DNA binding activity of MEQ.

It localises to the host nucleus. The protein localises to the host nucleolus. Functions as a DNA-binding transcription factor. Promotes transformation, host cell growth, host cell-cycle progression through G1/S phase, and possesses antiapoptotic activity. Forms functional heterodimers with host JUN. These heterodimers bind with high affinity DNA sequences called MEQ-responsive elements MERE I (TGACA/GTCA), while MEQ homodimers bind a second type of sites termed MERE II (ACACA). Both homo and heterodimerization of MEQ are required for oncogenesis. This Gallid herpesvirus 2 (strain Chicken/Md5/ATCC VR-987) (GaHV-2) protein is Oncoprotein MEQ (MDV005).